A 322-amino-acid polypeptide reads, in one-letter code: Pilin gene-inverting protein (322 aa).

In terms of biological role, may be the site-specific invertase required for pilin gene inversion. Moraxella can express either a Q or I pilin; the inversion of 2 kb of DNA determines which pilin is expressed. The chain is Pilin gene-inverting protein (piv) from Moraxella lacunata.